A 347-amino-acid chain; its full sequence is NADH-ubiquinone oxidoreductase chain 2 (347 aa).

10 helical membrane passes run 13 to 33, 55 to 75, 96 to 116, 122 to 142, 151 to 171, 178 to 198, 199 to 219, 237 to 257, 277 to 297, and 326 to 346; these read VFTG…WLGL, AAIK…MAIL, LMIV…FWVP, VPLT…ISIM, TNIL…GGLN, ILAY…PYNP, NITI…FLIL, LTWL…LPPL, IAPT…ARLI, and LPTL…ILSI.

This sequence belongs to the complex I subunit 2 family. In terms of assembly, core subunit of respiratory chain NADH dehydrogenase (Complex I) which is composed of 45 different subunits. Interacts with TMEM242.

It localises to the mitochondrion inner membrane. It catalyses the reaction a ubiquinone + NADH + 5 H(+)(in) = a ubiquinol + NAD(+) + 4 H(+)(out). In terms of biological role, core subunit of the mitochondrial membrane respiratory chain NADH dehydrogenase (Complex I) which catalyzes electron transfer from NADH through the respiratory chain, using ubiquinone as an electron acceptor. Essential for the catalytic activity and assembly of complex I. The polypeptide is NADH-ubiquinone oxidoreductase chain 2 (Pongo pygmaeus (Bornean orangutan)).